The sequence spans 334 residues: L-lactate dehydrogenase C chain (334 aa).

NAD(+)-binding positions include 30-58 (GQVGMACAVSVLLKELADELALVDILEDK), Arg-100, and Asn-139. Substrate contacts are provided by Asn-139 and Arg-170. His-194 (proton acceptor) is an active-site residue. Thr-249 is a substrate binding site.

Belongs to the LDH/MDH superfamily. LDH family. In terms of assembly, homotetramer.

It is found in the cytoplasm. The catalysed reaction is (S)-lactate + NAD(+) = pyruvate + NADH + H(+). Its pathway is fermentation; pyruvate fermentation to lactate; (S)-lactate from pyruvate: step 1/1. This Xenopus laevis (African clawed frog) protein is L-lactate dehydrogenase C chain (ldhc).